The chain runs to 365 residues: MAVYVVTGKLGAGKTLVAVSRIQRTLAKGGIVATNLNLKLHHFPQVGRYAKQCRVMRIADKPTLEDLESIGRGNLTYDESKNGLLVLDECGTWFNSRNWSDKSRQPVIDWCLHARKLGWDIIFIIQDISLMDKQARDALAEHVVYCRRLDKLNIPIIGGLISVLSGGRLPLPKVHFGIVKYGDNPQSLTVDKWVYTGTDLYAAYDTKQIFTSDREISPPYCPLSPYYTHGIFSVKRDAKYYMRMTKIYFKKMNRVFLMASFLALGAACGIFYKSQAYSNQLQHIQDNSKTSVISKTDQSAEILPRLSINSYSQMGYDVSVTFKDAKAKIYNSFDLIKDGYRVDIKDACHVTIVKKSYIQQITCEG.

8-15 (GKLGAGKT) is a binding site for ATP. A helical transmembrane segment spans residues 255–272 (VFLMASFLALGAACGIFY).

The protein belongs to the inovirus G1P protein family. As to quaternary structure, interacts with G4P; this interaction results in a complex that spans the inner an outer host membranes.

Its subcellular location is the host membrane. Its function is as follows. Isoform G1P plays an essential role in phage assembly. It is required to increase the number of adhesion zones between the inner and outer membranes of the host cell. The extrusion of neo-synthesized phages occurs at these adhesion sites. May be involved with G4P in creating zone through which the phage assembled and extruded. Isoform G11P is also involved in phage assembly, probably playing a structural role in the formation of the phage assembly site. In Salmonella phage IKe (Bacteriophage IKe), this protein is Gene 1 protein (I).